The chain runs to 302 residues: Probable 5-dehydro-4-deoxyglucarate dehydratase (302 aa).

This sequence belongs to the DapA family.

It catalyses the reaction 5-dehydro-4-deoxy-D-glucarate + H(+) = 2,5-dioxopentanoate + CO2 + H2O. It functions in the pathway carbohydrate acid metabolism; D-glucarate degradation; 2,5-dioxopentanoate from D-glucarate: step 2/2. The polypeptide is Probable 5-dehydro-4-deoxyglucarate dehydratase (Rhizobium rhizogenes (strain K84 / ATCC BAA-868) (Agrobacterium radiobacter)).